The sequence spans 666 residues: Putative L-type lectin-domain containing receptor kinase V.1 (666 aa).

An N-terminal signal peptide occupies residues Met1–Cys18. Topologically, residues Gln19 to Thr289 are extracellular. Residues Glu27–Lys257 are legume-lectin like. 6 N-linked (GlcNAc...) asparagine glycosylation sites follow: Asn29, Asn74, Asn123, Asn176, Asn204, and Asn259. A helical transmembrane segment spans residues Ile290 to Phe310. The Cytoplasmic segment spans residues Leu311–Arg666. A Protein kinase domain is found at Phe344–Leu625. ATP-binding positions include Leu350 to Val358 and Lys373. Asp469 (proton acceptor) is an active-site residue.

The protein in the C-terminal section; belongs to the protein kinase superfamily. Ser/Thr protein kinase family. It in the N-terminal section; belongs to the leguminous lectin family.

The protein resides in the cell membrane. It carries out the reaction L-seryl-[protein] + ATP = O-phospho-L-seryl-[protein] + ADP + H(+). It catalyses the reaction L-threonyl-[protein] + ATP = O-phospho-L-threonyl-[protein] + ADP + H(+). The protein is Putative L-type lectin-domain containing receptor kinase V.1 (LECRK51) of Arabidopsis thaliana (Mouse-ear cress).